We begin with the raw amino-acid sequence, 201 residues long: Cutinase (201 aa).

The N-terminal stretch at 1–20 (MKTSAQQLLSLLLLPLSAIA) is a signal peptide. A disulfide bridge connects residues Cys31 and Cys105. Residue Ser116 is the Nucleophile of the active site. Cysteines 164 and 171 form a disulfide. The active site involves Asp168. The active-site Proton donor/acceptor is the His181.

Belongs to the cutinase family. The 2 disulfide bonds play a critical role in holding the catalytic residues in juxta-position; reduction of the disulfide bridges results in the complete inactivation of the enzyme.

It is found in the secreted. It carries out the reaction cutin + H2O = cutin monomers.. In terms of biological role, catalyzes the hydrolysis of complex carboxylic polyesters found in the cell wall of plants. Degrades cutin, a macromolecule that forms the structure of the plant cuticle. Allows pathogenic fungi to penetrate through the cuticular barrier into the host plant during the initial stage of fungal infection. This chain is Cutinase (CUT1), found in Monilinia fructicola (Brown rot fungus).